The chain runs to 256 residues: 5'-nucleotidase SurE (256 aa).

A divalent metal cation-binding residues include D9, D10, S42, and N99.

The protein belongs to the SurE nucleotidase family. It depends on a divalent metal cation as a cofactor.

It is found in the cytoplasm. It catalyses the reaction a ribonucleoside 5'-phosphate + H2O = a ribonucleoside + phosphate. Nucleotidase that shows phosphatase activity on nucleoside 5'-monophosphates. This chain is 5'-nucleotidase SurE, found in Symbiobacterium thermophilum (strain DSM 24528 / JCM 14929 / IAM 14863 / T).